Here is a 565-residue protein sequence, read N- to C-terminus: NAD-dependent malic enzyme (565 aa).

The Proton donor role is filled by Y104. NAD(+) is bound at residue R157. The active-site Proton acceptor is K175. A divalent metal cation-binding residues include E246, D247, and D270. Residues D270 and N418 each contribute to the NAD(+) site.

It belongs to the malic enzymes family. Homotetramer. The cofactor is Mg(2+). It depends on Mn(2+) as a cofactor.

The enzyme catalyses (S)-malate + NAD(+) = pyruvate + CO2 + NADH. It catalyses the reaction oxaloacetate + H(+) = pyruvate + CO2. In Escherichia coli O127:H6 (strain E2348/69 / EPEC), this protein is NAD-dependent malic enzyme.